A 115-amino-acid polypeptide reads, in one-letter code: Macrophage migration inhibitory factor homolog (115 aa).

The Proton acceptor; via imino nitrogen role is filled by P2. Residues K33 and I65 each coordinate substrate.

The protein belongs to the MIF family.

The protein localises to the secreted. The enzyme catalyses L-dopachrome = 5,6-dihydroxyindole-2-carboxylate. It carries out the reaction 3-phenylpyruvate = enol-phenylpyruvate. Functionally, tautomerization of the methyl ester of L-dopachrome. Inhibits migration of human peripheral blood mononuclear cells. In Brugia malayi (Filarial nematode worm), this protein is Macrophage migration inhibitory factor homolog.